Consider the following 2506-residue polypeptide: Highly reducing polyketide synthase rstn3 (2506 aa).

In terms of domain architecture, Ketosynthase family 3 (KS3) spans 8 to 436 (VEPIAIVGMA…GANAHAILDA (429 aa)). Active-site for beta-ketoacyl synthase activity residues include cysteine 183, histidine 318, and histidine 358. Residues 547 to 875 (FIFTGQGAQW…KMVGSLFLSG (329 aa)) enclose the Malonyl-CoA:ACP transacylase (MAT) domain. Residues 941–1050 (HDLLGSRLPG…ASDQSISSVE (110 aa)) are N-terminal hotdog fold. The PKS/mFAS DH domain maps to 941 to 1212 (HDLLGSRLPG…FSSLETAVGE (272 aa)). Catalysis depends on histidine 973, which acts as the Proton acceptor; for dehydratase activity. Positions 1060-1212 (NKDSYDRRWY…FSSLETAVGE (153 aa)) are C-terminal hotdog fold. Catalysis depends on aspartate 1125, which acts as the Proton donor; for dehydratase activity. Residues 1263 to 1563 (VTRLAIRSSA…SGADIVLDDY (301 aa)) are methyltransferase (CMet) domain. One can recognise an Enoyl reductase (ER) domain in the interval 1827 to 2093 (GRVDSFYFKE…QDDYVGRVVL (267 aa)). Residues 2116 to 2296 (ASYLLIGCLG…QATSIALGMI (181 aa)) enclose the Ketoreductase (KR) domain. The Carrier domain maps to 2423–2501 (AVKVTTLGLI…DLAEKVVALA (79 aa)). O-(pantetheine 4'-phosphoryl)serine is present on serine 2460.

It depends on pantetheine 4'-phosphate as a cofactor.

The protein operates within antifungal biosynthesis. Its function is as follows. Highly reducing polyketide synthase; part of the gene cluster that mediates the biosynthesis of the tetrahydropyranyl antifungal agent restricticin that acts as an inhibitor of CYP51 and blocks the ergosterol biosynthesis. The highly reducing polyketide synthase rstn3, the short chain dehydrogenase rstn4, the cyclase rstn5, the FAD-dependent monooxygenase rstn6 and the enoylreductase rstn7 are required to generate the first stable intermediate desmethylrestrictinol. Rstn3 with rstn7 biosynthesize the first polyketide chain intermediate that is reduced by rstn4, followed by epoxidation by rstn6 before 6-endo cyclization via epoxide opening by rstn5 leads to desmethylrestrictinol. The methyltransferase rstn1 then catalyzes the C4 O-methylation of desmethylrestrictinol to produce restrictinol, and the nonribosomal peptide synthetase rstn8 catalyzes the C3 esterification of restrictinol with glycine that leads to restricticin. The chain is Highly reducing polyketide synthase rstn3 from Aspergillus nomiae NRRL (strain ATCC 15546 / NRRL 13137 / CBS 260.88 / M93).